Here is a 134-residue protein sequence, read N- to C-terminus: Large ribosomal subunit protein eL28 (134 aa).

Residue S60 is modified to Phosphoserine.

This sequence belongs to the eukaryotic ribosomal protein eL28 family. As to quaternary structure, component of the large ribosomal subunit (LSU). Mature yeast ribosomes consist of a small (40S) and a large (60S) subunit. The 40S small subunit contains 1 molecule of ribosomal RNA (18S rRNA) and at least 33 different proteins. The large 60S subunit contains 3 rRNA molecules (25S, 5.8S and 5S rRNA) and at least 46 different proteins.

The protein resides in the cytoplasm. Its function is as follows. Component of the ribosome, a large ribonucleoprotein complex responsible for the synthesis of proteins in the cell. The small ribosomal subunit (SSU) binds messenger RNAs (mRNAs) and translates the encoded message by selecting cognate aminoacyl-transfer RNA (tRNA) molecules. The large subunit (LSU) contains the ribosomal catalytic site termed the peptidyl transferase center (PTC), which catalyzes the formation of peptide bonds, thereby polymerizing the amino acids delivered by tRNAs into a polypeptide chain. The nascent polypeptides leave the ribosome through a tunnel in the LSU and interact with protein factors that function in enzymatic processing, targeting, and the membrane insertion of nascent chains at the exit of the ribosomal tunnel. In Schizosaccharomyces pombe (strain 972 / ATCC 24843) (Fission yeast), this protein is Large ribosomal subunit protein eL28 (rpl44).